An 836-amino-acid chain; its full sequence is Protein O-mannosyl-transferase TMTC2 (836 aa).

The chain crosses the membrane as a helical span at residues 1 to 21 (MIAELVSSALGLALYLNTLSA). The Extracellular segment spans residues 22-77 (DFCYDDSRAIKTNQDLLPETPWTHIFYNDFWGTLLTHSGSHKSYRPLCTLSFRLNH). Residues 78–98 (AIGGLNPWSYHLVNVLLHAAV) form a helical membrane-spanning segment. Topologically, residues 99–107 (TGLFTRFSK) are cytoplasmic. The chain crosses the membrane as a helical span at residues 108–128 (ALLGDGYWTFMAGLMFASHPI). Topologically, residues 129–132 (HTEA) are extracellular. A helical membrane pass occupies residues 133-153 (VAGIVGRADVGASLFFLLSLL). Residues 154 to 168 (CYIKHCSTRGYSART) lie on the Cytoplasmic side of the membrane. A run of 2 helical transmembrane segments spans residues 169–184 (WGWF…CSML) and 185–204 (WKEQ…VFVF). Residues 205-220 (HRLKMKQILPTIYKRK) are Cytoplasmic-facing. Residues 221–241 (NLSLFLSISLLTFWGTCLLGA) traverse the membrane as a helical segment. Residues 242–312 (RLYWMGNKPP…KTVCDWRNLH (71 aa)) are Extracellular-facing. Residues 313-333 (TVAFYSGLLLLAYCGLKNPSL) form a helical membrane-spanning segment. Residues 334-392 (EGECNGKALTNGKQNANGHSCHSDVEYRNSEMKPSFASKVENGIKNCVPQRTQLPSTEN) lie on the Cytoplasmic side of the membrane. A helical membrane pass occupies residues 393-415 (IVILSLSLLIIPFIPATNLFFYV). Topologically, residues 416 to 422 (GFVIAER) are extracellular. A helical transmembrane segment spans residues 423–443 (VLYIPSMGFCLLITVGARALY). Residues 444–449 (VKVQKR) are Cytoplasmic-facing. Residues 450–470 (FLKSLVFYATATLIVFYGVKT) traverse the membrane as a helical segment. Residues 471–836 (AIRNGDWQNE…EKQGLKTSKT (366 aa)) lie on the Extracellular side of the membrane. TPR repeat units follow at residues 493 to 526 (AKAW…RSNM), 527 to 560 (ADML…RPTL), 561 to 594 (ASAY…PDEN), 606 to 639 (TSCL…MPRH), 643 to 676 (QSLY…KTDH), 677 to 710 (IPAH…DPTK), 711 to 744 (GNCY…DNTE), 745 to 778 (FDVV…RPNY), and 779 to 812 (PAAL…KPDD).

It belongs to the TMTC family.

It is found in the membrane. The protein resides in the endoplasmic reticulum. The enzyme catalyses a di-trans,poly-cis-dolichyl beta-D-mannosyl phosphate + L-seryl-[protein] = 3-O-(alpha-D-mannosyl)-L-seryl-[protein] + a di-trans,poly-cis-dolichyl phosphate + H(+). It catalyses the reaction a di-trans,poly-cis-dolichyl beta-D-mannosyl phosphate + L-threonyl-[protein] = 3-O-(alpha-D-mannosyl)-L-threonyl-[protein] + a di-trans,poly-cis-dolichyl phosphate + H(+). It participates in protein modification; protein glycosylation. Functionally, transfers mannosyl residues to the hydroxyl group of serine or threonine residues. The 4 members of the TMTC family are O-mannosyl-transferases dedicated primarily to the cadherin superfamily, each member seems to have a distinct role in decorating the cadherin domains with O-linked mannose glycans at specific regions. Also acts as O-mannosyl-transferase on other proteins such as PDIA3. This is Protein O-mannosyl-transferase TMTC2 from Mus musculus (Mouse).